Reading from the N-terminus, the 329-residue chain is Ribosomal RNA small subunit methyltransferase H (329 aa).

Residues 47–49 (GGH), Asp67, Phe93, Asp115, and Gln122 each bind S-adenosyl-L-methionine.

Belongs to the methyltransferase superfamily. RsmH family.

Its subcellular location is the cytoplasm. It catalyses the reaction cytidine(1402) in 16S rRNA + S-adenosyl-L-methionine = N(4)-methylcytidine(1402) in 16S rRNA + S-adenosyl-L-homocysteine + H(+). Its function is as follows. Specifically methylates the N4 position of cytidine in position 1402 (C1402) of 16S rRNA. This Blochmanniella pennsylvanica (strain BPEN) protein is Ribosomal RNA small subunit methyltransferase H.